A 760-amino-acid chain; its full sequence is Transferrin receptor protein 1 (760 aa).

Residues 1–65 lie on the Cytoplasmic side of the membrane; sequence MMDQARSAFS…VTKPKRCGGS (65 aa). Residues 1 to 67 are mediates interaction with SH3BP4; it reads MMDQARSAFS…KPKRCGGSIC (67 aa). Phosphoserine occurs at positions 10 and 19. Position 20 is a phosphotyrosine (Y20). Residues 20–23 carry the Endocytosis signal motif; that stretch reads YTRF. T21 is modified (phosphothreonine). Phosphoserine is present on S24. Residues 58-61 carry the Stop-transfer sequence motif; that stretch reads KPKR. Residues C62 and C67 are each lipidated (S-palmitoyl cysteine). A helical; Signal-anchor for type II membrane protein transmembrane segment spans residues 66-86; sequence ICYGTIAVIIFFLIGFMIGYL. Topologically, residues 87 to 760 are extracellular; that stretch reads GYCKGVEPKT…GDVWDIDNEF (674 aa). In terms of domain architecture, PA spans 223–313; sequence SKAATVTGKL…GTGDPYTPGF (91 aa). Residues N251 and N317 are each glycosylated (N-linked (GlcNAc...) asparagine). The interval 569 to 760 is ligand-binding; that stretch reads TMDTYKELTE…GDVWDIDNEF (192 aa). The Cell attachment site signature appears at 646–648; it reads RGD. N-linked (GlcNAc...) asparagine glycosylation is found at N722 and N727.

The protein belongs to the peptidase M28 family. M28B subfamily. As to quaternary structure, homodimer; disulfide-linked. Binds one transferrin or HFE molecule per subunit. Interacts with SH3BP4. Interacts with STEAP3; facilitates TFRC endocytosis in erythroid precursor cells. Post-translationally, stearoylated by ZDHHC6 which inhibits TFRC-mediated activation of the JNK pathway and promotes mitochondrial fragmentation. Stearoylation does not affect iron uptake.

It is found in the cell membrane. The protein resides in the melanosome. Cellular uptake of iron occurs via receptor-mediated endocytosis of ligand-occupied transferrin receptor into specialized endosomes. Endosomal acidification leads to iron release. The apotransferrin-receptor complex is then recycled to the cell surface with a return to neutral pH and the concomitant loss of affinity of apotransferrin for its receptor. Transferrin receptor is necessary for development of erythrocytes and the nervous system. Positively regulates T and B cell proliferation through iron uptake. Acts as a lipid sensor that regulates mitochondrial fusion by regulating activation of the JNK pathway. When dietary levels of stearate (C18:0) are low, promotes activation of the JNK pathway, resulting in HUWE1-mediated ubiquitination and subsequent degradation of the mitofusin MFN2 and inhibition of mitochondrial fusion. When dietary levels of stearate (C18:0) are high, TFRC stearoylation inhibits activation of the JNK pathway and thus degradation of the mitofusin MFN2. Mediates uptake of NICOL1 into fibroblasts where it may regulate extracellular matrix production. This chain is Transferrin receptor protein 1 (TFRC), found in Pongo abelii (Sumatran orangutan).